The following is a 46-amino-acid chain: Homeobox protein Hox-D4 (46 aa).

A DNA-binding region (homeobox) is located at residues 1 to 46; that stretch reads VNSNYTGGEPKRSRTAYTRQQVLELEKEFLFNRYLTRRRRIQHTLT.

Belongs to the Antp homeobox family. Deformed subfamily. As to quaternary structure, forms a DNA-binding heterodimer with transcription factor PBX1.

It is found in the nucleus. Functionally, sequence-specific transcription factor which is part of a developmental regulatory system that provides cells with specific positional identities on the anterior-posterior axis. This is Homeobox protein Hox-D4 (HOXD4) from Ovis aries (Sheep).